We begin with the raw amino-acid sequence, 166 residues long: uncharacterized protein (166 aa).

Pentapeptide repeat domains are found at residues 38–77 (GECL…NLRR), 78–117 (ALLD…NLER), and 118–157 (SFLR…EFWE).

This is an uncharacterized protein from Synechocystis sp. (strain ATCC 27184 / PCC 6803 / Kazusa).